The primary structure comprises 124 residues: Small ribosomal subunit protein uS13 (124 aa).

The disordered stretch occupies residues 96–124 (LPVRGQRTKTNARTRKGPRRTVAGKKKAK).

This sequence belongs to the universal ribosomal protein uS13 family. As to quaternary structure, part of the 30S ribosomal subunit. Forms a loose heterodimer with protein S19. Forms two bridges to the 50S subunit in the 70S ribosome.

Functionally, located at the top of the head of the 30S subunit, it contacts several helices of the 16S rRNA. In the 70S ribosome it contacts the 23S rRNA (bridge B1a) and protein L5 of the 50S subunit (bridge B1b), connecting the 2 subunits; these bridges are implicated in subunit movement. Contacts the tRNAs in the A and P-sites. This chain is Small ribosomal subunit protein uS13, found in Symbiobacterium thermophilum (strain DSM 24528 / JCM 14929 / IAM 14863 / T).